Here is a 1186-residue protein sequence, read N- to C-terminus: Syntaxin-binding protein 5-like (1186 aa).

An N-acetylmethionine modification is found at Met1. Positions 15–40 (ASSPGSGSSSGSNSGGGAGSGSVHPA) are disordered. Low complexity predominate over residues 16 to 26 (SSPGSGSSSGS). WD repeat units follow at residues 74-107 (TALA…CYCQ), 114-153 (VLQL…SLKF), 158-194 (ITYC…GYVI), 213-247 (HLSD…ELRV), 253-285 (IHSI…PSRP), 307-349 (PILK…KAIT), 357-391 (IVEF…VVDL), 413-490 (TCTA…YKLK), 518-629 (QMIY…ELVI), and 643-705 (TSLA…IADN). Thr568 is subject to Phosphothreonine. Ser574, Ser589, and Ser593 each carry phosphoserine. The residue at position 596 (Thr596) is a Phosphothreonine. Residue Ser599 is modified to Phosphoserine. Position 709 is an omega-N-methylarginine (Arg709). The span at 748–769 (TSDHVNGHCTSPTSQSCSSGKR) shows a compositional bias: polar residues. Residues 748-771 (TSDHVNGHCTSPTSQSCSSGKRLS) form a disordered region. Ser763, Ser765, Ser766, Ser771, Ser772, Ser793, Ser800, Ser812, Ser820, Ser822, and Ser823 each carry phosphoserine. 4 WD repeats span residues 832–889 (ITAL…SGTF), 898–969 (TFSC…QTCL), 974–1018 (ITET…LDVN), and 1032–1055 (CFTN…TYSQ). At Thr1093 the chain carries Phosphothreonine. In terms of domain architecture, v-SNARE coiled-coil homology spans 1121–1181 (SIEGMKGAAG…HELMLKYKDK (61 aa)).

This sequence belongs to the WD repeat L(2)GL family. In terms of assembly, interacts with STX1A and STX4. In terms of processing, phosphorylated, leading to STXBP5L increased turnover and subsequent de-repression of insulin secretion. Phosphorylated on serine residues in response to glucose or phorbol esters. Post-translationally, ubiquitinated by the E3 ligase SYVN1, leading to STXBP5L proteasomal degradation. In terms of tissue distribution, detected in kidney, hippocampus and lung carcinoma.

It is found in the cytoplasm. Its subcellular location is the cell membrane. The protein resides in the membrane. In terms of biological role, plays a role in vesicle trafficking and exocytosis inhibition. In pancreatic beta-cells, inhibits insulin secretion probably by interacting with and regulating STX1A and STX4, key t-SNARE proteins involved in the fusion of insulin granules to the plasma membrane. Also plays a role in neurotransmitter release by inhibiting basal acetylcholine release from axon terminals and by preventing synaptic fatigue upon repetitive stimulation. Promotes as well axonal outgrowth. The polypeptide is Syntaxin-binding protein 5-like (STXBP5L) (Homo sapiens (Human)).